The chain runs to 447 residues: uncharacterized protein (447 aa).

Helical transmembrane passes span 17–37, 40–60, 95–115, 118–138, 154–174, 200–220, 243–263, 289–311, 333–353, 361–381, 393–415, and 419–441; these read IMMM…SSSA, VAGP…LFIM, IYWK…AIFI, WLPG…VTIV, AMIK…LLFV, GLIT…IIGV, IVAF…WNQV, AVIL…RILY, MFAI…SLFA, LMGS…FAHL, YYVK…ILIG, and TTSI…AYLV.

It belongs to the amino acid-polyamine-organocation (APC) superfamily.

It localises to the cell membrane. Functionally, may participate in leucine metabolism. May transport leucine or a compound related to leucine metabolism. This is an uncharacterized protein from Bacillus subtilis (strain 168).